An 86-amino-acid chain; its full sequence is Protein IDA-LIKE 1 (86 aa).

Residues M1–A27 form the signal peptide.

As to expression, expressed in roots.

The protein localises to the secreted. The protein resides in the extracellular space. Functionally, involved in an ethylene-independent separation step of floral abscission. May act with RLK5 and HSL2 as ligand-receptor pairs. The protein is Protein IDA-LIKE 1 (IDL1) of Arabidopsis thaliana (Mouse-ear cress).